We begin with the raw amino-acid sequence, 152 residues long: D-erythrulose-4-phosphate isomerase 2 (152 aa).

Cysteine 70 functions as the Proton acceptor in the catalytic mechanism.

The protein belongs to the LacAB/RpiB family.

It carries out the reaction D-erythrulose 4-phosphate = D-erythrose 4-phosphate. The protein operates within carbohydrate metabolism; erythritol degradation. Its pathway is carbohydrate metabolism; D-threitol degradation. It participates in carbohydrate metabolism; L-threitol degradation. Functionally, catalyzes the isomerization of D-erythrulose-4P to D-erythrose-4P. Involved in the degradation pathways of L-threitol, D-threitol and erythritol, that allow M.smegmatis to grow on these compounds as the sole carbon source. This chain is D-erythrulose-4-phosphate isomerase 2, found in Mycolicibacterium smegmatis (strain ATCC 700084 / mc(2)155) (Mycobacterium smegmatis).